Reading from the N-terminus, the 202-residue chain is Nucleoid occlusion factor SlmA (202 aa).

The 62-residue stretch at 14–75 folds into the HTH tetR-type domain; sequence KERQQQVLEV…ALIERIEQTL (62 aa). A DNA-binding region (H-T-H motif) is located at residues 38–57; it reads TTERLAKAVGVSEGALYRYF.

It belongs to the nucleoid occlusion factor SlmA family. As to quaternary structure, homodimer. Interacts with FtsZ.

The protein localises to the cytoplasm. Its subcellular location is the nucleoid. Required for nucleoid occlusion (NO) phenomenon, which prevents Z-ring formation and cell division over the nucleoid. Acts as a DNA-associated cell division inhibitor that binds simultaneously chromosomal DNA and FtsZ, and disrupts the assembly of FtsZ polymers. SlmA-DNA-binding sequences (SBS) are dispersed on non-Ter regions of the chromosome, preventing FtsZ polymerization at these regions. The protein is Nucleoid occlusion factor SlmA of Actinobacillus pleuropneumoniae serotype 5b (strain L20).